A 137-amino-acid chain; its full sequence is Large ribosomal subunit protein uL16 (137 aa).

The protein belongs to the universal ribosomal protein uL16 family. As to quaternary structure, part of the 50S ribosomal subunit.

In terms of biological role, binds 23S rRNA and is also seen to make contacts with the A and possibly P site tRNAs. This chain is Large ribosomal subunit protein uL16, found in Pseudomonas entomophila (strain L48).